A 314-amino-acid polypeptide reads, in one-letter code: tRNA dimethylallyltransferase (314 aa).

12–19 contributes to the ATP binding site; sequence GPTASGKT. Substrate is bound at residue 14–19; sequence TASGKT. 2 interaction with substrate tRNA regions span residues 37 to 40 and 162 to 166; these read DSAL and QRIIR.

It belongs to the IPP transferase family. As to quaternary structure, monomer. It depends on Mg(2+) as a cofactor.

The enzyme catalyses adenosine(37) in tRNA + dimethylallyl diphosphate = N(6)-dimethylallyladenosine(37) in tRNA + diphosphate. Functionally, catalyzes the transfer of a dimethylallyl group onto the adenine at position 37 in tRNAs that read codons beginning with uridine, leading to the formation of N6-(dimethylallyl)adenosine (i(6)A). This is tRNA dimethylallyltransferase from Acinetobacter baumannii (strain AB0057).